The sequence spans 326 residues: Guanine nucleotide-binding protein subunit beta-like protein 1 (326 aa).

WD repeat units lie at residues 17–61 (GTQS…IVTT), 64–104 (GHGG…NTIM), 159–202 (ARPG…VCSQ), 205–244 (CHEE…SLQV), 250–291 (LTNP…AVLA), and 292–325 (FHSA…LYPC).

Expressed at low levels in most tissues and highly expressed in adult testis. Widely expressed in adult brain with striking regional distribution in forebrain, midbrain, and hindbrain structures, including the thalamus, hypothalamus, amygdala, hippocampus, pons.

It localises to the cytoplasm. The protein resides in the nucleus. Acts as a critical regulator of DNA damage response (DDR) signaling via specifically regulating phosphatidylinositol 3-kinase-related protein kinase (PIKK) family proteins. This Mus musculus (Mouse) protein is Guanine nucleotide-binding protein subunit beta-like protein 1 (Gnb1l).